We begin with the raw amino-acid sequence, 231 residues long: Flagellar L-ring protein (231 aa).

A signal peptide spans 1–18 (MKRFVSVVALSGVVSLAG). The N-palmitoyl cysteine moiety is linked to residue cysteine 19. Cysteine 19 carries the S-diacylglycerol cysteine lipid modification.

This sequence belongs to the FlgH family. As to quaternary structure, the basal body constitutes a major portion of the flagellar organelle and consists of four rings (L,P,S, and M) mounted on a central rod.

It localises to the cell outer membrane. The protein localises to the bacterial flagellum basal body. In terms of biological role, assembles around the rod to form the L-ring and probably protects the motor/basal body from shearing forces during rotation. The chain is Flagellar L-ring protein from Pseudomonas fluorescens (strain Pf0-1).